The chain runs to 156 residues: Small ribosomal subunit protein uS7 (156 aa).

It belongs to the universal ribosomal protein uS7 family. In terms of assembly, part of the 30S ribosomal subunit. Contacts proteins S9 and S11.

In terms of biological role, one of the primary rRNA binding proteins, it binds directly to 16S rRNA where it nucleates assembly of the head domain of the 30S subunit. Is located at the subunit interface close to the decoding center, probably blocks exit of the E-site tRNA. The polypeptide is Small ribosomal subunit protein uS7 (Campylobacter fetus subsp. fetus (strain 82-40)).